We begin with the raw amino-acid sequence, 81 residues long: CLAVATA3/ESR (CLE)-related protein 25 (81 aa).

Positions 1 to 30 are cleaved as a signal peptide; that stretch reads MGGNGIRALVGVIASLGLIVFLLVGILANS. The segment at 57 to 81 is disordered; the sequence is KRKVPNGPDPIHNRKAETSRRPPRV. A hydroxyproline mark is found at P61 and P64. P64 carries O-linked (Ara...) hydroxyproline glycosylation. Over residues 67–81 the composition is skewed to basic and acidic residues; sequence IHNRKAETSRRPPRV.

It belongs to the CLV3/ESR signal peptide family. The O-glycosylation (arabinosylation) of the hydroxyproline Pro-64 enhances binding affinity of the CLE25p peptide for its receptor. As to expression, mostly expressed in flowers and siliques, and, to a lower extent, in roots, stems, apex, seedlings, leaves and pollen.

It is found in the secreted. The protein resides in the extracellular space. Functionally, extracellular signal peptide that regulates cell fate. Represses root apical meristem maintenance. Regulates the transition of protophloem cells from proliferation to differentiation, thus impinging on postembryonic growth capacity of the root meristem; this signaling pathway requires CRN and CLV2. The sequence is that of CLAVATA3/ESR (CLE)-related protein 25 from Arabidopsis thaliana (Mouse-ear cress).